We begin with the raw amino-acid sequence, 142 residues long: Large ribosomal subunit protein uL11 (142 aa).

Belongs to the universal ribosomal protein uL11 family. As to quaternary structure, part of the ribosomal stalk of the 50S ribosomal subunit. Interacts with L10 and the large rRNA to form the base of the stalk. L10 forms an elongated spine to which L12 dimers bind in a sequential fashion forming a multimeric L10(L12)X complex. One or more lysine residues are methylated.

In terms of biological role, forms part of the ribosomal stalk which helps the ribosome interact with GTP-bound translation factors. The sequence is that of Large ribosomal subunit protein uL11 from Nitrobacter hamburgensis (strain DSM 10229 / NCIMB 13809 / X14).